A 757-amino-acid chain; its full sequence is Cartilage oligomeric matrix protein (757 aa).

Residues 1 to 20 (MVPDTACVLLLTLAALGASG) form the signal peptide. The interval 22–86 (GQSPLGSDLG…SVRTGLPSVR (65 aa)) is COMP N-terminal. In terms of domain architecture, EGF-like 1 spans 87-126 (PLLHCAPGFCFPGVACIQTESGARCGPCPAGFTGNGSHCT). 21 disulfide bridges follow: cysteine 91–cysteine 102, cysteine 96–cysteine 111, cysteine 114–cysteine 125, cysteine 131–cysteine 142, cysteine 136–cysteine 151, cysteine 154–cysteine 178, cysteine 184–cysteine 197, cysteine 191–cysteine 206, cysteine 209–cysteine 221, cysteine 229–cysteine 243, cysteine 237–cysteine 253, cysteine 255–cysteine 266, cysteine 282–cysteine 287, cysteine 292–cysteine 312, cysteine 328–cysteine 348, cysteine 351–cysteine 371, cysteine 387–cysteine 407, cysteine 410–cysteine 430, cysteine 448–cysteine 468, cysteine 484–cysteine 504, and cysteine 520–cysteine 741. An N-linked (GlcNAc...) asparagine glycan is attached at asparagine 121. One can recognise an EGF-like 2; calcium-binding domain in the interval 127–179 (DVNECNAHPCFPRVRCINTSPGFRCEACPPGYSGPTHQGVGLAFAKANKQVCT). The EGF-like 3; calcium-binding domain maps to 180-222 (DINECETGQHNCVPNSVCINTRGSFQCGPCQPGFVGDQASGCQ). Residues 225-267 (AQRFCPDGSPSECHEHADCVLERDGSRSCVCAVGWAGNGILCG) enclose the EGF-like 4 domain. TSP type-3 repeat units lie at residues 268–300 (RDTD…NSGQ), 301–336 (EDVD…NPDQ), 337–359 (RNTD…NDDQ), 360–395 (KDTD…NSDQ), 396–418 (KDSD…NPDQ), 419–456 (ADVD…NSAQ), 457–492 (EDSD…NPGQ), and 493–528 (EDAD…EVTL). The tract at residues 298-503 (SGQEDVDRDG…DADRDGVGDV (206 aa)) is disordered. Basic and acidic residues-rich tracts occupy residues 334 to 346 (PDQR…KWGD) and 352 to 370 (RSQK…RGDA). The Cell attachment site motif lies at 367-369 (RGD). Residues 467–476 (ACDDDDDNDG) show a composition bias toward acidic residues. Residues 527–757 (TLTDFRAFQT…DYETHQLRQA (231 aa)) are mediates cell survival and induction of the IAP family of survival proteins. The TSP C-terminal domain occupies 532 to 746 (RAFQTVVLDP…LRYRCNDTIP (215 aa)). Asparagine 742 is a glycosylation site (N-linked (GlcNAc...) asparagine).

The protein belongs to the thrombospondin family. As to quaternary structure, pentamer; disulfide-linked. Exists in a more compact conformation in the presence of calcium and shows a more extended conformation in the absence of calcium. Interacts with ITGB3, ITGA5 and FN1. Binding to FN1 requires the presence of divalent cations (Ca(2+), Mg(2+) or Mn(2+)). The greatest amount of binding is seen in the presence of Mn(2+). Interacts with MATN1, MATN3, MATN4 and ACAN. Binds heparin, heparan sulfate and chondroitin sulfate. EDTA dimishes significantly its binding to ACAN and abolishes its binding to MATN3, MATN4 and chondroitin sulfate. Interacts with collagen I, II and IX, and interaction with these collagens is dependent on the presence of zinc ions. Interacts with ADAMTS12. Interacts with ITGA7. The cofactor is Ca(2+). In terms of processing, proteolytically cleaved by metalloproteases ADAMTS4 and ADAMTS1 with ADAMTS4 showing more potent activity. Abundantly expressed in the chondrocyte extracellular matrix, and is also found in bone, tendon, ligament and synovium and blood vessels. Increased amounts are produced during late stages of osteoarthritis in the area adjacent to the main defect.

It is found in the secreted. The protein localises to the extracellular space. The protein resides in the extracellular matrix. In terms of biological role, plays a role in the structural integrity of cartilage via its interaction with other extracellular matrix proteins such as the collagens and fibronectin. Can mediate the interaction of chondrocytes with the cartilage extracellular matrix through interaction with cell surface integrin receptors. Could play a role in the pathogenesis of osteoarthritis. Potent suppressor of apoptosis in both primary chondrocytes and transformed cells. Suppresses apoptosis by blocking the activation of caspase-3 and by inducing the IAP family of survival proteins (BIRC3, BIRC2, BIRC5 and XIAP). Essential for maintaining a vascular smooth muscle cells (VSMCs) contractile/differentiated phenotype under physiological and pathological stimuli. Maintains this phenotype of VSMCs by interacting with ITGA7. In Homo sapiens (Human), this protein is Cartilage oligomeric matrix protein.